We begin with the raw amino-acid sequence, 756 residues long: LIM domain and actin-binding protein 1 (756 aa).

Met1 is modified (N-acetylmethionine). Ser15 and Ser55 each carry phosphoserine. Positions 44-56 (AAEEANMEKRRSN) are enriched in basic and acidic residues. Disordered stretches follow at residues 44-183 (AAEE…SNKI) and 204-377 (QTKI…AVKK). A compositionally biased stretch (low complexity) spans 107-118 (EVASSSASGVEA). Ser130 carries the post-translational modification Phosphoserine. Residues 140-173 (RIKDTEHLKDHSAESKKMENCLAESRHEVGKPET) show a composition bias toward basic and acidic residues. The Required for interaction with NPC1L1 signature appears at 164 to 166 (SRH). Ser221 carries the phosphoserine modification. Position 225 is a phosphotyrosine (Tyr225). Phosphoserine is present on residues Ser226 and Ser238. Positions 245–254 (EKSESRRNLE) are enriched in basic and acidic residues. Phosphoserine is present on Ser259. Polar residues predominate over residues 274 to 287 (VSKQSSSTNYTNEL). Over residues 294–303 (IKTHKLEQKE) the composition is skewed to basic and acidic residues. Phosphoserine is present on residues Ser339, Ser346, Ser358, Ser365, and Ser370. The region spanning 384-444 (ETCVECQKTV…KPHFNQLFKS (61 aa)) is the LIM zinc-binding domain. At Lys435 the chain carries N6-succinyllysine. Ser486 bears the Phosphoserine mark. The interval 489-509 (VEDAPIAKVGVLTASMEAKAS) is required for interaction with MYO5B. The segment at 508 to 726 (ASSQLEKEDK…TTQKQKSQDV (219 aa)) is disordered. Residues 512–523 (LEKEDKPAETKK) show a composition bias toward basic and acidic residues. Residues 533-542 (ELSSSGSALE) show a composition bias toward low complexity. Residues 552–563 (WPPEDEVSKPEA) show a composition bias toward basic and acidic residues. Residues Ser597, Ser600, Ser605, and Ser613 each carry the phosphoserine modification. A compositionally biased stretch (basic and acidic residues) spans 627 to 637 (AERKQMEKASA). A compositionally biased stretch (polar residues) spans 638–651 (SEKNGSVGKTTWPS). Positions 652–667 (KESRGGEAAGRSKEVQ) are enriched in basic and acidic residues. A compositionally biased stretch (polar residues) spans 691 to 721 (LQQQSPLEPKSKNWSSFADNTSAKEFTTQKQ). Residues Ser695, Ser723, and Ser738 each carry the phosphoserine modification.

In terms of assembly, interacts with NPC1L1; bridges NPC1L1 with MYO5B. Interacts with MYO5B; bridges MYO5B with NPC1L1. Interacts with PXN; this complex stabilizes actin dynamics. Interacts with F-actin and G-actin. Interacts with LUZP1 (via C-terminus); both proteins restrict ciliation and may work together to regulate this process. Binds RAB40B (GTP-bound); interaction influences LIMA1 subcellular localization in lamellipodia during cell migration. Phosphorylation of the C-terminal region by MAPK1/MAPK3 reduces its association with F-actin and contributes to actin filament reorganization and enhances cell motility. In terms of processing, ubiquitinated by the ECS(RAB40B) complex leading to its degradation. In terms of tissue distribution, widely expressed. Highest levels of isoform 2 are expressed in lung, spleen and small intestine. Isoform 2 is expressed at higher levels than isoform 1 in most tissues except liver, fat and kidney. Isoform 1 and isoform 2 are expressed at low levels in skeletal muscle, heart, stomach and lymph.

Its subcellular location is the cytoplasm. The protein localises to the cell junction. It localises to the focal adhesion. It is found in the cytoskeleton. The protein resides in the stress fiber. Its subcellular location is the cell membrane. The protein localises to the cell projection. It localises to the ruffle. It is found in the lamellipodium. Its function is as follows. Actin-binding protein involved in actin cytoskeleton regulation and dynamics. Increases the number and size of actin stress fibers and inhibits membrane ruffling. Inhibits actin filament depolymerization. Bundles actin filaments, delays filament nucleation and reduces formation of branched filaments. Acts as a negative regulator of primary cilium formation. Plays a role in cholesterol homeostasis. Influences plasma cholesterol levels through regulation of intestinal cholesterol absorption. May act as a scaffold protein by regulating NPC1L1 transportation, an essential protein for cholesterol absorption, to the plasma membrane by recruiting MYO5B to NPC1L1, and thus facilitates cholesterol uptake. The polypeptide is LIM domain and actin-binding protein 1 (Sus scrofa (Pig)).